Reading from the N-terminus, the 447-residue chain is Tubulin alpha-1 chain (447 aa).

Residues glutamine 11, glutamate 72, serine 141, glycine 145, threonine 146, threonine 180, asparagine 207, and asparagine 229 each contribute to the GTP site. Residue glutamate 72 coordinates Mg(2+). Glutamate 255 is an active-site residue.

Belongs to the tubulin family. As to quaternary structure, dimer of alpha and beta chains. A typical microtubule is a hollow water-filled tube with an outer diameter of 25 nm and an inner diameter of 15 nM. Alpha-beta heterodimers associate head-to-tail to form protofilaments running lengthwise along the microtubule wall with the beta-tubulin subunit facing the microtubule plus end conferring a structural polarity. Microtubules usually have 13 protofilaments but different protofilament numbers can be found in some organisms and specialized cells. Requires Mg(2+) as cofactor.

It localises to the cytoplasm. Its subcellular location is the cytoskeleton. It catalyses the reaction GTP + H2O = GDP + phosphate + H(+). In terms of biological role, tubulin is the major constituent of microtubules, a cylinder consisting of laterally associated linear protofilaments composed of alpha- and beta-tubulin heterodimers. Microtubules grow by the addition of GTP-tubulin dimers to the microtubule end, where a stabilizing cap forms. Below the cap, tubulin dimers are in GDP-bound state, owing to GTPase activity of alpha-tubulin. The protein is Tubulin alpha-1 chain (TUB1) of Saccharomyces cerevisiae (strain ATCC 204508 / S288c) (Baker's yeast).